Consider the following 257-residue polypeptide: Undecaprenyl-diphosphatase (257 aa).

7 helical membrane-spanning segments follow: residues 42–62 (YVLFNLICHLGTLGSILYMFL), 76–96 (IFHIILGTLPLFPLVLILKPI), 103–123 (PQYLGLCFLFSAALLFSGVYF), 136–156 (CLTIGLFQAVAVLPGISRSGA), 172–192 (IQFSFLLAIPAILGGTFLEIW), 209–229 (QFLTGFITSFMIGCASLWAVI), and 237–257 (WVYFAWYCLFIGIATTLYFQM).

This sequence belongs to the UppP family.

The protein resides in the cell inner membrane. It catalyses the reaction di-trans,octa-cis-undecaprenyl diphosphate + H2O = di-trans,octa-cis-undecaprenyl phosphate + phosphate + H(+). Functionally, catalyzes the dephosphorylation of undecaprenyl diphosphate (UPP). Confers resistance to bacitracin. This chain is Undecaprenyl-diphosphatase, found in Protochlamydia amoebophila (strain UWE25).